We begin with the raw amino-acid sequence, 323 residues long: tRNA U34 carboxymethyltransferase (323 aa).

Carboxy-S-adenosyl-L-methionine is bound by residues K91, W105, K110, G130, 152–154, 181–182, M196, Y200, and R315; these read DPT and IE.

Belongs to the class I-like SAM-binding methyltransferase superfamily. CmoB family. In terms of assembly, homotetramer.

It catalyses the reaction carboxy-S-adenosyl-L-methionine + 5-hydroxyuridine(34) in tRNA = 5-carboxymethoxyuridine(34) in tRNA + S-adenosyl-L-homocysteine + H(+). Its function is as follows. Catalyzes carboxymethyl transfer from carboxy-S-adenosyl-L-methionine (Cx-SAM) to 5-hydroxyuridine (ho5U) to form 5-carboxymethoxyuridine (cmo5U) at position 34 in tRNAs. The chain is tRNA U34 carboxymethyltransferase from Shigella boydii serotype 18 (strain CDC 3083-94 / BS512).